The primary structure comprises 347 residues: tRNA N6-adenosine threonylcarbamoyltransferase (347 aa).

Positions 113 and 117 each coordinate Fe cation. Substrate is bound by residues 136-140 (LVSGG), D170, G183, D187, and N282. D310 provides a ligand contact to Fe cation.

The protein belongs to the KAE1 / TsaD family. Fe(2+) serves as cofactor.

It localises to the cytoplasm. It catalyses the reaction L-threonylcarbamoyladenylate + adenosine(37) in tRNA = N(6)-L-threonylcarbamoyladenosine(37) in tRNA + AMP + H(+). Its function is as follows. Required for the formation of a threonylcarbamoyl group on adenosine at position 37 (t(6)A37) in tRNAs that read codons beginning with adenine. Is involved in the transfer of the threonylcarbamoyl moiety of threonylcarbamoyl-AMP (TC-AMP) to the N6 group of A37, together with TsaE and TsaB. TsaD likely plays a direct catalytic role in this reaction. This Cutibacterium acnes (strain DSM 16379 / KPA171202) (Propionibacterium acnes) protein is tRNA N6-adenosine threonylcarbamoyltransferase.